A 181-amino-acid chain; its full sequence is Large ribosomal subunit protein uL5 (181 aa).

Belongs to the universal ribosomal protein uL5 family. As to quaternary structure, part of the 50S ribosomal subunit; part of the 5S rRNA/L5/L18/L25 subcomplex. Contacts the 5S rRNA and the P site tRNA. Forms a bridge to the 30S subunit in the 70S ribosome.

In terms of biological role, this is one of the proteins that bind and probably mediate the attachment of the 5S RNA into the large ribosomal subunit, where it forms part of the central protuberance. In the 70S ribosome it contacts protein S13 of the 30S subunit (bridge B1b), connecting the 2 subunits; this bridge is implicated in subunit movement. Contacts the P site tRNA; the 5S rRNA and some of its associated proteins might help stabilize positioning of ribosome-bound tRNAs. This chain is Large ribosomal subunit protein uL5, found in Colwellia psychrerythraea (strain 34H / ATCC BAA-681) (Vibrio psychroerythus).